The following is a 132-amino-acid chain: Phosphoribosyl-AMP cyclohydrolase (132 aa).

Asp-78 provides a ligand contact to Mg(2+). Residue Cys-79 participates in Zn(2+) binding. Mg(2+) is bound by residues Asp-80 and Asp-82. Residues Cys-96 and Cys-103 each coordinate Zn(2+).

It belongs to the PRA-CH family. Homodimer. The cofactor is Mg(2+). Requires Zn(2+) as cofactor.

Its subcellular location is the cytoplasm. The enzyme catalyses 1-(5-phospho-beta-D-ribosyl)-5'-AMP + H2O = 1-(5-phospho-beta-D-ribosyl)-5-[(5-phospho-beta-D-ribosylamino)methylideneamino]imidazole-4-carboxamide. The protein operates within amino-acid biosynthesis; L-histidine biosynthesis; L-histidine from 5-phospho-alpha-D-ribose 1-diphosphate: step 3/9. Functionally, catalyzes the hydrolysis of the adenine ring of phosphoribosyl-AMP. The chain is Phosphoribosyl-AMP cyclohydrolase from Nitrosococcus oceani (strain ATCC 19707 / BCRC 17464 / JCM 30415 / NCIMB 11848 / C-107).